The primary structure comprises 48 residues: Probable antitoxin PhoAT (48 aa).

It belongs to the PhoAT antitoxin family. Interacts with toxin PhoH2.

Probable antitoxin component of a type II toxin-antitoxin (TA) system. The probable cognate antitoxin is PhoAT; the toxin gene can be expressed in the absence of the antitoxin gene in M.smegmatis strain mc(2)155. In Mycolicibacterium smegmatis (strain ATCC 700084 / mc(2)155) (Mycobacterium smegmatis), this protein is Probable antitoxin PhoAT.